Here is an 880-residue protein sequence, read N- to C-terminus: Alanine--tRNA ligase (880 aa).

H566, H570, C668, and H672 together coordinate Zn(2+).

The protein belongs to the class-II aminoacyl-tRNA synthetase family. Zn(2+) is required as a cofactor.

Its subcellular location is the cytoplasm. The enzyme catalyses tRNA(Ala) + L-alanine + ATP = L-alanyl-tRNA(Ala) + AMP + diphosphate. Functionally, catalyzes the attachment of alanine to tRNA(Ala) in a two-step reaction: alanine is first activated by ATP to form Ala-AMP and then transferred to the acceptor end of tRNA(Ala). Also edits incorrectly charged Ser-tRNA(Ala) and Gly-tRNA(Ala) via its editing domain. The chain is Alanine--tRNA ligase from Nostoc sp. (strain PCC 7120 / SAG 25.82 / UTEX 2576).